The chain runs to 133 residues: Phosphoribosyl-AMP cyclohydrolase (133 aa).

Asp-82 serves as a coordination point for Mg(2+). Residue Cys-83 participates in Zn(2+) binding. Mg(2+) is bound by residues Asp-84 and Asp-86. Cys-100 and Cys-107 together coordinate Zn(2+).

This sequence belongs to the PRA-CH family. As to quaternary structure, homodimer. Mg(2+) is required as a cofactor. Requires Zn(2+) as cofactor.

The protein resides in the cytoplasm. The catalysed reaction is 1-(5-phospho-beta-D-ribosyl)-5'-AMP + H2O = 1-(5-phospho-beta-D-ribosyl)-5-[(5-phospho-beta-D-ribosylamino)methylideneamino]imidazole-4-carboxamide. It participates in amino-acid biosynthesis; L-histidine biosynthesis; L-histidine from 5-phospho-alpha-D-ribose 1-diphosphate: step 3/9. Functionally, catalyzes the hydrolysis of the adenine ring of phosphoribosyl-AMP. The sequence is that of Phosphoribosyl-AMP cyclohydrolase from Aromatoleum aromaticum (strain DSM 19018 / LMG 30748 / EbN1) (Azoarcus sp. (strain EbN1)).